A 199-amino-acid polypeptide reads, in one-letter code: Holliday junction branch migration complex subunit RuvA (199 aa).

The segment at 1 to 63 (MIGCLIGEVF…EDAQQLYGFS (63 aa)) is domain I. The tract at residues 64–142 (DAQEKTIFRT…TLAQGTSSAA (79 aa)) is domain II. Positions 143–150 (ALPQIQFV) are flexible linker. The tract at residues 150 to 199 (VSNSPVAEAEAALQSLGYKPLEAQKAVAAVKADYTESADIIRAALKSMMK) is domain III.

Belongs to the RuvA family. In terms of assembly, homotetramer. Forms an RuvA(8)-RuvB(12)-Holliday junction (HJ) complex. HJ DNA is sandwiched between 2 RuvA tetramers; dsDNA enters through RuvA and exits via RuvB. An RuvB hexamer assembles on each DNA strand where it exits the tetramer. Each RuvB hexamer is contacted by two RuvA subunits (via domain III) on 2 adjacent RuvB subunits; this complex drives branch migration. In the full resolvosome a probable DNA-RuvA(4)-RuvB(12)-RuvC(2) complex forms which resolves the HJ.

The protein localises to the cytoplasm. In terms of biological role, the RuvA-RuvB-RuvC complex processes Holliday junction (HJ) DNA during genetic recombination and DNA repair, while the RuvA-RuvB complex plays an important role in the rescue of blocked DNA replication forks via replication fork reversal (RFR). RuvA specifically binds to HJ cruciform DNA, conferring on it an open structure. The RuvB hexamer acts as an ATP-dependent pump, pulling dsDNA into and through the RuvAB complex. HJ branch migration allows RuvC to scan DNA until it finds its consensus sequence, where it cleaves and resolves the cruciform DNA. The sequence is that of Holliday junction branch migration complex subunit RuvA from Acinetobacter baumannii (strain ACICU).